The following is a 276-amino-acid chain: Large ribosomal subunit protein uL2 (276 aa).

2 disordered regions span residues 34–55 (LQPL…RHQG) and 221–276 (RGSV…RRTK). Residues 37–48 (LKNNAGRNNNGR) show a composition bias toward polar residues.

The protein belongs to the universal ribosomal protein uL2 family. In terms of assembly, part of the 50S ribosomal subunit. Forms a bridge to the 30S subunit in the 70S ribosome.

In terms of biological role, one of the primary rRNA binding proteins. Required for association of the 30S and 50S subunits to form the 70S ribosome, for tRNA binding and peptide bond formation. It has been suggested to have peptidyltransferase activity; this is somewhat controversial. Makes several contacts with the 16S rRNA in the 70S ribosome. In Enterococcus faecalis (strain ATCC 700802 / V583), this protein is Large ribosomal subunit protein uL2.